The primary structure comprises 344 residues: MQLLLDLHPDQYPLEGFRQRQLLEWVFVQGVGTFEAMTNLPAQARADLASRFRLNPFREIETVRSADGSVKYLFTLQDGRQMEAVYMPYLDRKTICVSTMVGCPAKCAFCATGAMGFGRNLTPGEIVGQVLAVAGGEGLAPRELRNLVFMGMGEPLLNYENTMQAARILLHPQALGMSKRRVTLSTVGLPKGIRRLAAEDDLGIKLAISLHAPDEATRQRIIPTGHRNSIAEIMAAAREYQAVTGRRVTFEYSMLRGINDHLWQAEELADLLRGLVSHVNLIPMNPWDGSGFESSTEEQIQAFYDVLAARGVDVSVRRSRGKDAGAACGQLALKRPAAAVGASA.

The active-site Proton acceptor is E83. The Radical SAM core domain occupies 89–323 (YLDRKTICVS…VSVRRSRGKD (235 aa)). Residues C96 and C328 are joined by a disulfide bond. [4Fe-4S] cluster-binding residues include C103, C107, and C110. Residues 153 to 154 (GE), S185, 209 to 211 (SLH), and N285 each bind S-adenosyl-L-methionine. The active-site S-methylcysteine intermediate is the C328.

Belongs to the radical SAM superfamily. RlmN family. [4Fe-4S] cluster is required as a cofactor.

The protein localises to the cytoplasm. The catalysed reaction is adenosine(2503) in 23S rRNA + 2 reduced [2Fe-2S]-[ferredoxin] + 2 S-adenosyl-L-methionine = 2-methyladenosine(2503) in 23S rRNA + 5'-deoxyadenosine + L-methionine + 2 oxidized [2Fe-2S]-[ferredoxin] + S-adenosyl-L-homocysteine. It carries out the reaction adenosine(37) in tRNA + 2 reduced [2Fe-2S]-[ferredoxin] + 2 S-adenosyl-L-methionine = 2-methyladenosine(37) in tRNA + 5'-deoxyadenosine + L-methionine + 2 oxidized [2Fe-2S]-[ferredoxin] + S-adenosyl-L-homocysteine. Functionally, specifically methylates position 2 of adenine 2503 in 23S rRNA and position 2 of adenine 37 in tRNAs. The sequence is that of Probable dual-specificity RNA methyltransferase RlmN from Deinococcus geothermalis (strain DSM 11300 / CIP 105573 / AG-3a).